The chain runs to 208 residues: Sodium/potassium-transporting ATPase subunit beta-1-interacting protein 2 (208 aa).

4 helical membrane-spanning segments follow: residues 1-23 (MGYC…CVLE), 35-55 (APIL…FGTI), 62-82 (ITGY…VICF), and 153-173 (LQIV…KCIT).

This sequence belongs to the NKAIN family. As to quaternary structure, interacts with ATP1B1. Expressed in fetal brain. Weakly expressed in adult brain and thymus. Not expressed in any other normal tissue examined.

The protein localises to the cell membrane. The chain is Sodium/potassium-transporting ATPase subunit beta-1-interacting protein 2 (NKAIN2) from Homo sapiens (Human).